Consider the following 220-residue polypeptide: CASP-like protein 4B1 (220 aa).

Residues 1 to 74 (MAMVTTEAAA…RWRREDMLDK (74 aa)) are Cytoplasmic-facing. Residues 13-56 (TTAATAAAEKPQDVEKPDYAPYNGASTTADGGTGARARRGDGGG) are disordered. A helical transmembrane segment spans residues 75–95 (SPLALHAAAAIFAFVALVLVA). The Extracellular segment spans residues 96-109 (SNQHGDWMQFDRYQ). The chain crosses the membrane as a helical span at residues 110-127 (EYRYLLAIASLALLYSLA). Residues 128-152 (QAARHAHRMRGGVDPVSSASARLLD) are Cytoplasmic-facing. Residues 153-173 (FVGDQVVAYLLMSALSAAVPI) form a helical membrane-spanning segment. Over 174 to 188 (TNRMRSAVVNNFTDA) the chain is Extracellular. A glycan (N-linked (GlcNAc...) asparagine) is linked at N184. Residues 189 to 209 (TAAAISMAFFSFVALALSAVV) traverse the membrane as a helical segment. Topologically, residues 210–220 (SGYKLSKQTYM) are cytoplasmic.

The protein belongs to the Casparian strip membrane proteins (CASP) family. Homodimer and heterodimers.

It is found in the cell membrane. This is CASP-like protein 4B1 from Sorghum bicolor (Sorghum).